Consider the following 84-residue polypeptide: MKGFLLFISILMMIGTIVVGKEGYAMDHEGCKFSCFIRPAGFCDGYCKTHLKASSGYCAWPACYCYGVPDHIKVWDYATNKCGK.

The first 20 residues, 1-20, serve as a signal peptide directing secretion; sequence MKGFLLFISILMMIGTIVVG. An LCN-type CS-alpha/beta domain is found at 21-83; the sequence is KEGYAMDHEG…VWDYATNKCG (63 aa). 4 disulfide bridges follow: C31–C82, C35–C58, C43–C63, and C47–C65. The residue at position 82 (C82) is a Cysteine amide.

It belongs to the long (4 C-C) scorpion toxin superfamily. Sodium channel inhibitor family. Beta subfamily. In terms of tissue distribution, expressed by the venom gland.

The protein resides in the secreted. In terms of biological role, alpha toxins bind voltage-independently at site-3 of sodium channels (Nav) and inhibit the inactivation of the activated channels, thereby blocking neuronal transmission. This toxin acts on Nav1.2/SCN2A, Nav1.3/SCN3A, Nav1.5/SCN5A, Nav1.6/SCN8A and Nav1.7/SCN9A voltage-gated sodium channels, with the highest affinity for Nav1.3/SCN3A, followed by Nav1.6/SCN8A and Nav1.7/SCN9A which are affected almost equally. Interestingly, shows a significant shift of the voltage dependence of activation for Nav1.3/SCN3A that is characteristic of beta-toxins. In addition, in presence of LPS, this toxin inhibits the release of NO, IL-6 and TNF-alpha in J774.1 cells. Further, in the absence of LPS, it stimulates the production of the anti-inflammatory cytokine IL-10. This toxin is active on mammals. The polypeptide is Alpha-mammal toxin Ts2 (Tityus serrulatus (Brazilian scorpion)).